The chain runs to 166 residues: Small ribosomal subunit protein bS6 (166 aa).

Basic and acidic residues-rich tracts occupy residues 96–142 (HEEG…DRPP) and 149–166 (GGDR…GGAE). The tract at residues 96 to 166 (HEEGPSAMMQ…PREGFEGGAE (71 aa)) is disordered.

This sequence belongs to the bacterial ribosomal protein bS6 family.

In terms of biological role, binds together with bS18 to 16S ribosomal RNA. The polypeptide is Small ribosomal subunit protein bS6 (Mesorhizobium japonicum (strain LMG 29417 / CECT 9101 / MAFF 303099) (Mesorhizobium loti (strain MAFF 303099))).